A 324-amino-acid polypeptide reads, in one-letter code: NADH-ubiquinone oxidoreductase chain 1 (324 aa).

Helical transmembrane passes span Leu-9–Ile-29, Pro-43–Ile-63, Phe-77–Leu-97, Leu-106–Gly-126, Ile-146–Phe-166, Thr-177–Ala-197, Leu-228–Phe-248, Gln-259–Ile-279, and Phe-299–Ser-319.

This sequence belongs to the complex I subunit 1 family.

It is found in the mitochondrion inner membrane. It carries out the reaction a ubiquinone + NADH + 5 H(+)(in) = a ubiquinol + NAD(+) + 4 H(+)(out). Core subunit of the mitochondrial membrane respiratory chain NADH dehydrogenase (Complex I) that is believed to belong to the minimal assembly required for catalysis. Complex I functions in the transfer of electrons from NADH to the respiratory chain. The immediate electron acceptor for the enzyme is believed to be ubiquinone. This chain is NADH-ubiquinone oxidoreductase chain 1 (MT-ND1), found in Scyliorhinus canicula (Small-spotted catshark).